Here is a 311-residue protein sequence, read N- to C-terminus: Olfactory receptor 2M4 (311 aa).

At 1–25 the chain is on the extracellular side; it reads MVWENQTFNSIFILLGIFNHSPTHT. Asn5 carries an N-linked (GlcNAc...) asparagine glycan. A helical transmembrane segment spans residues 26-49; sequence FLFSLVLGIFSLALMENISMVLLI. Topologically, residues 50–57 are cytoplasmic; sequence YIEKQLHT. The helical transmembrane segment at 58–79 threads the bilayer; sequence PMYFLLSQLSLMDLMLICTTLP. The Extracellular portion of the chain corresponds to 80-100; the sequence is KMIFSYLSGKKSISLAGCGTQ. A disulfide bridge connects residues Cys97 and Cys189. A helical transmembrane segment spans residues 101 to 120; sequence IFFYVSLLGAECFLLAVMAY. The Cytoplasmic segment spans residues 121-139; sequence DRYVAICHPLQYTILMNPK. Residues 140-158 traverse the membrane as a helical segment; that stretch reads LCVFMTVASWTLGSLDGII. Residues 159–195 lie on the Extracellular side of the membrane; the sequence is VLAAVLSFSYCSSLEIHHFFCDVAALLPLSCTETSAF. The chain crosses the membrane as a helical span at residues 196–219; the sequence is ERLLVICCVVMLIFPVSVIILSYS. Residues 220–236 lie on the Cytoplasmic side of the membrane; it reads HVLRAVIHMGSGESRRK. Residues 237-259 form a helical membrane-spanning segment; it reads AFTTCSSHLSVVGLYYGAAMFMY. At 260–272 the chain is on the extracellular side; that stretch reads MRPASKHTPDQDK. A helical transmembrane segment spans residues 273–292; it reads MVSAFYTILTPMLNPLIYSL. Residues 293–311 lie on the Cytoplasmic side of the membrane; it reads RNKEVFRALQKVLKKRKLI.

The protein belongs to the G-protein coupled receptor 1 family.

Its subcellular location is the cell membrane. Its function is as follows. Odorant receptor. This Homo sapiens (Human) protein is Olfactory receptor 2M4 (OR2M4).